A 63-amino-acid polypeptide reads, in one-letter code: Parvalbumin alpha (63 aa).

EF-hand domains are found at residues 28–38 (IEEEELGLILK) and 39–63 (VLLAAGDKDGDGKIGVDEFVTLVSE). Glutamate 29, glutamate 32, aspartate 45, aspartate 47, aspartate 49, lysine 51, and glutamate 56 together coordinate Ca(2+).

In terms of tissue distribution, detected in muscle and cutaneous mucus. In the skin, detected in cells in the basal region of the glandular epithelium of the dermal mucus glands (at protein level).

Its subcellular location is the cytoplasm. It is found in the secreted. In terms of biological role, in muscle, parvalbumin is thought to be involved in relaxation after contraction. It binds two calcium ions. This is Parvalbumin alpha from Rana temporaria (European common frog).